The chain runs to 182 residues: Homeobox expressed in ES cells 1-A (182 aa).

Residues 103–163 (YRGRRPRTAF…QNRRAKLKRS (61 aa)) constitute a DNA-binding region (homeobox).

It belongs to the ANF homeobox family. As to expression, initially expressed in the anterior dorsal region of early embryos and later exclusively in the primordium of the anterior pituitary gland.

It is found in the nucleus. Appears to be involved in the regional specification of the anterior head of Xenopus embryos. This chain is Homeobox expressed in ES cells 1-A (hesx1-a), found in Xenopus laevis (African clawed frog).